The sequence spans 517 residues: MNVFSIFSLVFLAAFGSCADDRRSALEECFREADYEEFLEIARNGLKKTSNPKHVVVVGAGMAGLSAAYVLAGAGHRVTLLEASDRVGGRVNTYRDEKEGWYVNMGPMRLPERHRIVRTYIAKFGLKLNEFFQENENAWYFIRNIRKRVWEVKKDPGVFKYPVKPSEEGKSASQLYRESLKKVIEELKRTNCSYILDKYDTYSTKEYLIKEGNLSRGAVDMIGDLLNEDSSYYLSFIESLKNDDLFSYEKRFDEISDGFDQLPKSMHQAIAEMVHLNAQVIKIQRDAEKVRVAYQTPAKTLSYVTADYVIVCATSRAVRRISFEPPLPPKKAHALRSIHYKSATKIFLTCTRKFWEADGIHGGKSTTDLPSRFIYYPNHNFTSGVGVIVAYVLADDSDFFQALDIKTSADIVINDLSLIHQLPKNEIQALCYPSLIKKWSLDKYTMGALTSFTPYQFQDYIETVAAPVGRIYFAGEYTATVHGWLDSTIKSGLTAARNVNRASQKPSRIHLINDNQL.

An N-terminal signal peptide occupies residues 1-19; sequence MNVFSIFSLVFLAAFGSCA. Cysteine 29 and cysteine 192 form a disulfide bridge. FAD contacts are provided by residues 62–63, 82–83, arginine 90, and 106–109; these read MA, EA, and GPMR. A substrate-binding site is contributed by arginine 109. N-linked (GlcNAc...) asparagine glycosylation occurs at asparagine 191. Residue valine 280 participates in FAD binding. Cysteine 350 and cysteine 431 are disulfide-bonded. A glycan (N-linked (GlcNAc...) asparagine) is linked at asparagine 380. Substrate is bound at residue tyrosine 391. Residues glutamate 476 and 483–488 each bind FAD; that span reads GWLDST. Substrate is bound at residue 483 to 484; the sequence is GW.

The protein belongs to the flavin monoamine oxidase family. FIG1 subfamily. Monomer. This is in contrast with most of its orthologs, that are non-covalently linked homodimers. FAD serves as cofactor. Post-translationally, N-glycosylated. Expressed by the venom gland.

It is found in the secreted. It carries out the reaction an L-alpha-amino acid + O2 + H2O = a 2-oxocarboxylate + H2O2 + NH4(+). The catalysed reaction is L-leucine + O2 + H2O = 4-methyl-2-oxopentanoate + H2O2 + NH4(+). The enzyme catalyses L-phenylalanine + O2 + H2O = 3-phenylpyruvate + H2O2 + NH4(+). It catalyses the reaction L-tryptophan + O2 + H2O = indole-3-pyruvate + H2O2 + NH4(+). It carries out the reaction L-methionine + O2 + H2O = 4-methylsulfanyl-2-oxobutanoate + H2O2 + NH4(+). The catalysed reaction is L-isoleucine + O2 + H2O = (S)-3-methyl-2-oxopentanoate + H2O2 + NH4(+). The enzyme catalyses L-arginine + O2 + H2O = 5-guanidino-2-oxopentanoate + H2O2 + NH4(+). It catalyses the reaction L-aspartate + O2 + H2O = oxaloacetate + H2O2 + NH4(+). It carries out the reaction L-histidine + O2 + H2O = 3-(imidazol-5-yl)pyruvate + H2O2 + NH4(+). The catalysed reaction is L-asparagine + O2 + H2O = 2-oxosuccinamate + H2O2 + NH4(+). The enzyme catalyses L-tyrosine + O2 + H2O = 3-(4-hydroxyphenyl)pyruvate + H2O2 + NH4(+). It catalyses the reaction L-glutamine + O2 + H2O = 2-oxoglutaramate + H2O2 + NH4(+). It carries out the reaction L-alanine + O2 + H2O = pyruvate + H2O2 + NH4(+). The catalysed reaction is L-lysine + O2 + H2O = 6-amino-2-oxohexanoate + H2O2 + NH4(+). The enzyme catalyses L-glutamate + O2 + H2O = H2O2 + 2-oxoglutarate + NH4(+). Its function is as follows. Catalyzes an oxidative deamination of predominantly hydrophobic and aromatic L-amino acids, thus producing hydrogen peroxide that may contribute to the diverse toxic effects of this enzyme. Is highly active against L-Tyr, L-Asp, L-Phe, L-Glu, L-Trp, L-His, L-Gln, L-Ile, L-Met, L-Leu and moderately active against L-Lys, L-Arg, L-Ala and L-Asn. Exhibits diverse biological activities, such as edema, inflammatory cell infiltration, cytotoxicity and apoptosis, as well as induction of platelet aggregation. Effects of snake L-amino oxidases on platelets are controversial, since they either induce aggregation or inhibit agonist-induced aggregation. These different effects are probably due to different experimental conditions. This protein may also induce hemorrhage, hemolysis, and have antibacterial and antiparasitic activities. In Bungarus fasciatus (Banded krait), this protein is L-amino-acid oxidase.